The primary structure comprises 308 residues: Acyl transferase (308 aa).

Catalysis depends on charge relay system residues serine 116, aspartate 213, and histidine 243.

It belongs to the LuxD family.

It participates in lipid metabolism; fatty acid reduction for biolumincescence. In terms of biological role, acyl transferase is part of the fatty acid reductase system required for aldehyde biosynthesis; it produces fatty acids for the luminescent reaction. The polypeptide is Acyl transferase (Shewanella hanedai (Alteromonas hanedai)).